The following is a 1280-amino-acid chain: Multidrug resistance protein 1 (1280 aa).

Residues 1–72 (MSRAHAAYAN…YADATDRVLM (72 aa)) lie on the Cytoplasmic side of the membrane. The 286-residue stretch at 72–357 (MIAGTAFAVA…VAPSRTAFTE (286 aa)) folds into the ABC transmembrane type-1 1 domain. 6 helical membrane-spanning segments follow: residues 73–93 (IAGTAFAVACGAGMPVFSFIF), 120–140 (YVGIAMLIACAGHVMCWTVAA), 189–209 (KLSQGIMNGSMGVIGYIAGFV), 216–236 (LMMIGMMPFIIVMAAIIGSIV), 297–317 (LSAAVIMALMYVSYTVAFFFG), and 326–345 (RDMADIISTFLAVLMGSFGL). Topologically, residues 346–712 (GFVAPSRTAF…MRMNKDKAWA (367 aa)) are cytoplasmic. The ABC transporter 1 domain maps to 391–634 (IEFRNVRFAY…DGEFAAVAKM (244 aa)). Residue 426-433 (GASGCGKS) coordinates ATP. 6 helical membrane passes run 713-733 (VALGILSSVVIGSARPASSIV), 762-781 (PLFIVFAVANFSGWILHGFY), 837-857 (IGLKVQTMCIIASGLVVGFIY), 858-878 (QWKLALVALACMPLMIGCSLT), 938-958 (IIAGGIYGITQFIFYGVYALC), and 976-996 (VMIASMSILFGAQNAGEAGAF). The ABC transmembrane type-1 2 domain occupies 713–1002 (VALGILSSVV…AGAFATKLAD (290 aa)). Residues 1036 to 1274 (IEYRNVQFIY…GGEYKTRYDL (239 aa)) enclose the ABC transporter 2 domain. Residue 1071–1078 (GQTGCGKS) participates in ATP binding. Asn-1113 carries N-linked (GlcNAc...) asparagine glycosylation.

This sequence belongs to the ABC transporter superfamily. ABCB family. Multidrug resistance exporter (TC 3.A.1.201) subfamily.

It localises to the membrane. The enzyme catalyses ATP + H2O + xenobioticSide 1 = ADP + phosphate + xenobioticSide 2.. In terms of biological role, energy-dependent efflux pump responsible for decreased drug accumulation in multi-drug-resistant cells. Confers vinblastine resistance. The polypeptide is Multidrug resistance protein 1 (MDR1) (Leishmania enriettii).